The primary structure comprises 451 residues: DNA double-strand break repair protein Mre11 (451 aa).

Residues Asp-8, His-10, Asp-49, and Asn-84 each contribute to the Mn(2+) site. His-85 (proton donor) is an active-site residue. Residues His-168, His-198, and His-200 each contribute to the Mn(2+) site. The interval 374-451 is disordered; the sequence is REDNPPDLGD…GRPSLDRWIG (78 aa). Residues 396–416 are compositionally biased toward acidic residues; that stretch reads GSEESSEEPEESDGEEVGLEV.

Belongs to the MRE11/RAD32 family. Homodimer. Forms a heterotetramer composed of two Mre11 subunits and two Rad50 subunits. Mn(2+) serves as cofactor.

With respect to regulation, nuclease activity is regulated by Rad50. Its function is as follows. Part of the Rad50/Mre11 complex, which is involved in the early steps of DNA double-strand break (DSB) repair. The complex may facilitate opening of the processed DNA ends to aid in the recruitment of HerA and NurA. Mre11 binds to DSB ends and has both double-stranded 3'-5' exonuclease activity and single-stranded endonuclease activity. The protein is DNA double-strand break repair protein Mre11 of Methanopyrus kandleri (strain AV19 / DSM 6324 / JCM 9639 / NBRC 100938).